The sequence spans 303 residues: MSSRQNQQSSSQHSSSSQQGGQGGQGVQGSSSYSRTEVHTSSGGPTIGGAQRTVPVPPGSHSEVHEEREVIKHGTKTESETHVVTVPVTTFGSTNMESVRTGFTVTQDKNLTVAAPNIAAPIHSNLDLNLGGGARAEITAGTTVDLSKIQRKDLGPEEYARYKAKVEQLARQDEQDAGMRAAQYREEVERDAELIRQILERQHIRDLEFRKEMVENQVNRQEREIQLEAEYAMRALELERNAAKEALESAKAQTNVNVKVESAIGTTVSKGAIQTSADKSSTTKTGPTTVTQIKHTEQHTERR.

Over residues 1–19 (MSSRQNQQSSSQHSSSSQQ) the composition is skewed to low complexity. The tract at residues 1–67 (MSSRQNQQSS…PGSHSEVHEE (67 aa)) is disordered. A coiled-coil region spans residues 170–257 (ARQDEQDAGM…ESAKAQTNVN (88 aa)). 2 CAHS motif regions span residues 184–202 (YREE…LERQ) and 221–239 (QERE…LELE). The segment covering 270 to 280 (KGAIQTSADKS) has biased composition (polar residues). The interval 270 to 303 (KGAIQTSADKSSTTKTGPTTVTQIKHTEQHTERR) is disordered. The span at 282–291 (TTKTGPTTVT) shows a compositional bias: low complexity. Positions 294 to 303 (KHTEQHTERR) are enriched in basic and acidic residues.

The protein belongs to the Cytosolic-abundant heat soluble protein (CAHS) family.

It is found in the cytoplasm. In terms of biological role, CAHS proteins are cytosolic heat soluble proteins that seem to contribute to the anhydrobiosis in tardigrades, but their specific mechanisms are yet to be identified. It is possible that protection during anhydrobiosis might occur via the stabilization of vitrifying small molecules such as sugars, but not via the direct glass transition of CAHS proteins themselves. This is Cytosolic-abundant heat soluble protein 3 from Ramazzottius varieornatus (Water bear).